A 1321-amino-acid polypeptide reads, in one-letter code: Bile salt export pump (1321 aa).

The Cytoplasmic portion of the chain corresponds to 1–62 (MSDSVILRSV…FSSSKDIWLM (62 aa)). The ABC transmembrane type-1 1 domain maps to 62-385 (MLMGGVCALL…ASSCLEIFST (324 aa)). Residues 63–83 (LMGGVCALLHGMAQPGILIIF) form a helical membrane-spanning segment. Residues 84-147 (GIMTDIFIKY…MIKFSGIYAG (64 aa)) are Extracellular-facing. Residues N109, N116, N122, and N125 are each glycosylated (N-linked (GlcNAc...) asparagine). Residues 148 to 168 (VGMTVLILGYFQIRLWVITGA) form a helical membrane-spanning segment. The Cytoplasmic portion of the chain corresponds to 169–215 (RQIRRMRKIYFRRIMRMEIGWFDCTSVGELNSRFADDIEKINDAIAD). Residues 216-236 (QLAHFLQRMSTAMCGLLLGFY) traverse the membrane as a helical segment. Residues 237–240 (RGWK) are Extracellular-facing. A helical membrane pass occupies residues 241–261 (LTLVILAVSPLIGIGAAVIGL). The Cytoplasmic segment spans residues 262-319 (SIAKFTELELKAYAKAGSIADEVLSSIRTVAAFGGENKEVERYEKNLVFAQRWGIWKG). Residues 320-340 (MVMGFFTGYMWCLIFFCYALA) traverse the membrane as a helical segment. Topologically, residues 341 to 353 (FWYGSTLVLDEEE) are extracellular. A helical transmembrane segment spans residues 354–374 (YTPGTLVQIFLCVILAAMNIG). Over 375-755 (HASSCLEIFS…KYNIPEWHYI (381 aa)) the chain is Cytoplasmic. Positions 420 to 656 (IEFHNVTFHY…KGVYFMLVTL (237 aa)) constitute an ABC transporter 1 domain. 455 to 462 (GSSGAGKS) lines the ATP pocket. T586 bears the Phosphothreonine mark. A Phosphoserine modification is found at S587. The interaction with HAX1 stretch occupies residues 651–674 (FMLVTLQSQGDNAHKETSIMGKDA). Phosphoserine is present on residues S692, S703, and S706. The region spanning 755 to 1043 (ILVGSLSAAI…TFSYTPSYAK (289 aa)) is the ABC transmembrane type-1 2 domain. The chain crosses the membrane as a helical span at residues 756 to 776 (LVGSLSAAINGAVTPIYSLLF). Residues 777–794 (SQLLGTFSLLDKEQQRSE) lie on the Extracellular side of the membrane. A helical transmembrane segment spans residues 795 to 815 (IHSMCLFFVILGCVSIFTQFL). At 816–869 (QGYTFAKSGELLTKRLRKFGFKAMLGQDIGWFDDLRNNPGVLTTRLATDASQVQ) the chain is on the cytoplasmic side. Helical transmembrane passes span 870 to 890 (GATG…IAAL) and 891 to 911 (LIAF…FPFL). The Cytoplasmic segment spans residues 912-979 (ALSGAVQTKM…SYKTAVRKAN (68 aa)). Residues 980–1000 (IYGLCFAFSQGIAFLANSAAY) traverse the membrane as a helical segment. The Extracellular portion of the chain corresponds to 1001 to 1011 (RYGGYLIAYEG). The chain crosses the membrane as a helical span at residues 1012-1032 (LGFSHVFRVVSSVALSATAVG). Over 1033–1321 (RTFSYTPSYA…KLVITGAPIS (289 aa)) the chain is Cytoplasmic. An ABC transporter 2 domain is found at 1078–1316 (IDFIDCKFTY…KGAYYKLVIT (239 aa)). ATP is bound at residue 1113–1120 (GSSGCGKS). S1321 is modified (phosphoserine).

This sequence belongs to the ABC transporter superfamily. ABCB family. Multidrug resistance exporter (TC 3.A.1.201) subfamily. As to quaternary structure, interacts with HAX1. Interacts with the adapter protein complex 2 (AP-2) throught AP2A2 or AP2A1; this interaction regulates cell membrane expression of ABCB11 through its internalization in a clathrin-dependent manner and its subsequent degradation. Ubiquitinated; short-chain ubiquitination regulates cell-Surface expression of ABCB11. Post-translationally, N-glycosylated. In terms of tissue distribution, expressed predominantly, if not exclusively in the liver, where it was further localized to the canalicular microvilli and to subcanalicular vesicles of the hepatocytes by in situ.

Its subcellular location is the apical cell membrane. It localises to the recycling endosome membrane. The protein localises to the endosome. The protein resides in the cell membrane. The catalysed reaction is cholate(in) + ATP + H2O = cholate(out) + ADP + phosphate + H(+). It carries out the reaction taurocholate(in) + ATP + H2O = taurocholate(out) + ADP + phosphate + H(+). It catalyses the reaction glycocholate(in) + ATP + H2O = glycocholate(out) + ADP + phosphate + H(+). The enzyme catalyses glycochenodeoxycholate(in) + ATP + H2O = glycochenodeoxycholate(out) + ADP + phosphate + H(+). The catalysed reaction is taurochenodeoxycholate(in) + ATP + H2O = taurochenodeoxycholate(out) + ADP + phosphate + H(+). It carries out the reaction glycoursodeoxycholate(in) + ATP + H2O = glycoursodeoxycholate(out) + ADP + phosphate + H(+). It catalyses the reaction tauroursodeoxycholate(in) + ATP + H2O = tauroursodeoxycholate(out) + ADP + phosphate + H(+). The enzyme catalyses taurodeoxycholate(in) + ATP + H2O = taurodeoxycholate(out) + ADP + phosphate + H(+). The catalysed reaction is pravastatin(in) + ATP + H2O = pravastatin(out) + ADP + phosphate + H(+). With respect to regulation, the uptake of taurocholate is inhibited by taurolithocholate sulfate with an IC(50) of 52.9 uM. Pravastatin competitively inhibits the transport of taurocholic acid. Cyclosporin A, glibenclamide, rifampicin and troglitazonestrongly competitively inhibit the transport activity of taurocholate. The canalicular transport activity of taurocholate is strongly dependent on canalicular membrane cholesterol content. The uptake of taurocholate is increased by short- and medium-chain fatty acids. Cholesterol increases transport capacity of taurocholate without affecting the affinity for the substrate. In terms of biological role, catalyzes the transport of the major hydrophobic bile salts, such as taurine and glycine-conjugated cholic acid across the canalicular membrane of hepatocytes in an ATP-dependent manner, therefore participates in hepatic bile acid homeostasis and consequently to lipid homeostasis through regulation of biliary lipid secretion in a bile salts dependent manner. Transports taurine-conjugated bile salts more rapidly than glycine-conjugated bile salts. Also transports non-bile acid compounds, such as pravastatin and fexofenadine in an ATP-dependent manner and may be involved in their biliary excretion. The protein is Bile salt export pump of Rattus norvegicus (Rat).